Consider the following 151-residue polypeptide: Ribosome maturation factor RimP (151 aa).

The protein belongs to the RimP family.

It is found in the cytoplasm. In terms of biological role, required for maturation of 30S ribosomal subunits. In Shewanella woodyi (strain ATCC 51908 / MS32), this protein is Ribosome maturation factor RimP.